The chain runs to 271 residues: Histone chaperone asf-1 (271 aa).

A disordered region spans residues 152-271; sequence KWDSEASAPP…PKQQGMAMAQ (120 aa). Acidic residues-rich tracts occupy residues 168-185 and 211-258; these read PEAD…DELA and IEED…EMEI.

It belongs to the ASF1 family. Interacts with histone H3 and histone H4.

It localises to the nucleus. Functionally, histone chaperone that facilitates histone deposition and histone exchange and removal during nucleosome assembly and disassembly. The sequence is that of Histone chaperone asf-1 (asf-1) from Neurospora crassa (strain ATCC 24698 / 74-OR23-1A / CBS 708.71 / DSM 1257 / FGSC 987).